A 270-amino-acid chain; its full sequence is Orotidine 5'-phosphate decarboxylase (270 aa).

Residues Asp41, 63–65 (KTH), 95–104 (DRKFADIGNT), Tyr221, and Arg239 contribute to the substrate site. Lys97 (proton donor) is an active-site residue.

The protein belongs to the OMP decarboxylase family.

It carries out the reaction orotidine 5'-phosphate + H(+) = UMP + CO2. It functions in the pathway pyrimidine metabolism; UMP biosynthesis via de novo pathway; UMP from orotate: step 2/2. This Candida boidinii (Yeast) protein is Orotidine 5'-phosphate decarboxylase (URA3).